A 155-amino-acid chain; its full sequence is Transcriptional repressor NrdR (155 aa).

The segment at 3–34 (CPFCGNVDTQVKDSRPAEDHVAIRRRRFCPAC) is a zinc-finger region. Positions 49 to 139 (LVVIKSSGKR…VYKNFQAADD (91 aa)) constitute an ATP-cone domain.

It belongs to the NrdR family. Zn(2+) is required as a cofactor.

Negatively regulates transcription of bacterial ribonucleotide reductase nrd genes and operons by binding to NrdR-boxes. This is Transcriptional repressor NrdR from Dinoroseobacter shibae (strain DSM 16493 / NCIMB 14021 / DFL 12).